Consider the following 221-residue polypeptide: GTP cyclohydrolase 1 (221 aa).

Cys-111, His-114, and Cys-182 together coordinate Zn(2+).

This sequence belongs to the GTP cyclohydrolase I family. In terms of assembly, homomer.

It carries out the reaction GTP + H2O = 7,8-dihydroneopterin 3'-triphosphate + formate + H(+). The protein operates within cofactor biosynthesis; 7,8-dihydroneopterin triphosphate biosynthesis; 7,8-dihydroneopterin triphosphate from GTP: step 1/1. The protein is GTP cyclohydrolase 1 of Erwinia tasmaniensis (strain DSM 17950 / CFBP 7177 / CIP 109463 / NCPPB 4357 / Et1/99).